Reading from the N-terminus, the 651-residue chain is Beta-glucuronidase (651 aa).

Residues 1 to 22 (MLRGPAAVWAALGPLLWACGLA) form the signal peptide. N172 and N419 each carry an N-linked (GlcNAc...) asparagine glycan. E450 (proton donor) is an active-site residue. N-linked (GlcNAc...) asparagine glycosylation occurs at N630.

The protein belongs to the glycosyl hydrolase 2 family. In terms of assembly, homotetramer.

It is found in the lysosome. The enzyme catalyses a beta-D-glucuronoside + H2O = D-glucuronate + an alcohol. Inhibited by L-aspartic acid. In terms of biological role, plays an important role in the degradation of dermatan and keratan sulfates. This Felis catus (Cat) protein is Beta-glucuronidase (GUSB).